Here is a 149-residue protein sequence, read N- to C-terminus: MKIINILFCLFLLLLNSCNSNDNDTLKNNAQQTKSRGKRDLTQKEATPEKPKSKEELLREKLSEDQKTHLDWLKEALGNDGEFDKFLGYDESKIKSALNHIKSELDKCTGDNSEQQKSTFKQTVQGFFSGGNIDNFANNAVSNCNNGGS.

An N-terminal signal peptide occupies residues 1–17 (MKIINILFCLFLLLLNS). Cys18 carries the N-palmitoyl cysteine lipid modification. Cys18 carries the S-diacylglycerol cysteine lipid modification. The tract at residues 26–58 (LKNNAQQTKSRGKRDLTQKEATPEKPKSKEELL) is disordered. Positions 38–58 (KRDLTQKEATPEKPKSKEELL) are enriched in basic and acidic residues.

Belongs to the Multicopy lipoprotein (Mlp) family.

It is found in the cell outer membrane. Its function is as follows. An outer membrane protein that may participate in pathogenesis. Some human Lyme disease patients have antibodies against this protein. The Mlp proteins probably undergo intragenic recombination, generating new alleles. This chain is Lipoprotein MlpF, found in Borreliella burgdorferi (strain ATCC 35210 / DSM 4680 / CIP 102532 / B31) (Borrelia burgdorferi).